Reading from the N-terminus, the 205-residue chain is Holliday junction branch migration complex subunit RuvA (205 aa).

The tract at residues methionine 1–arginine 64 is domain I. The domain II stretch occupies residues serine 65 to alanine 143. The interval histidine 144 to serine 153 is flexible linker. Positions serine 153 to lysine 205 are domain III.

The protein belongs to the RuvA family. In terms of assembly, homotetramer. Forms an RuvA(8)-RuvB(12)-Holliday junction (HJ) complex. HJ DNA is sandwiched between 2 RuvA tetramers; dsDNA enters through RuvA and exits via RuvB. An RuvB hexamer assembles on each DNA strand where it exits the tetramer. Each RuvB hexamer is contacted by two RuvA subunits (via domain III) on 2 adjacent RuvB subunits; this complex drives branch migration. In the full resolvosome a probable DNA-RuvA(4)-RuvB(12)-RuvC(2) complex forms which resolves the HJ.

It is found in the cytoplasm. In terms of biological role, the RuvA-RuvB-RuvC complex processes Holliday junction (HJ) DNA during genetic recombination and DNA repair, while the RuvA-RuvB complex plays an important role in the rescue of blocked DNA replication forks via replication fork reversal (RFR). RuvA specifically binds to HJ cruciform DNA, conferring on it an open structure. The RuvB hexamer acts as an ATP-dependent pump, pulling dsDNA into and through the RuvAB complex. HJ branch migration allows RuvC to scan DNA until it finds its consensus sequence, where it cleaves and resolves the cruciform DNA. The protein is Holliday junction branch migration complex subunit RuvA of Rhodopseudomonas palustris (strain BisA53).